The chain runs to 187 residues: Elongation factor P (187 aa).

The protein belongs to the elongation factor P family.

Its subcellular location is the cytoplasm. It participates in protein biosynthesis; polypeptide chain elongation. In terms of biological role, involved in peptide bond synthesis. Stimulates efficient translation and peptide-bond synthesis on native or reconstituted 70S ribosomes in vitro. Probably functions indirectly by altering the affinity of the ribosome for aminoacyl-tRNA, thus increasing their reactivity as acceptors for peptidyl transferase. This Desulfotalea psychrophila (strain LSv54 / DSM 12343) protein is Elongation factor P.